We begin with the raw amino-acid sequence, 186 residues long: MARTKKTRRITDIMPMRKTDKRPENLSRPGKKLTRYELDAKSREEKKKKKRKGLTAGSRHSAVDTSKTIVLNEKKDPRVGSRKKVPLIVEFVNKPEKGMFIPSGALEEKAKTIDPMLELTQLENNESLNQLLDELDAGKTLSKKDQIFVNQCLDRIAQLMAELGIEEESEDDLYRTFETIDINQFK.

The tract at residues 1–65 (MARTKKTRRI…AGSRHSAVDT (65 aa)) is disordered. Composition is skewed to basic and acidic residues over residues 9-25 (RITD…RPEN) and 34-45 (TRYELDAKSREE).

It belongs to the YihI family. Interacts with Der.

A GTPase-activating protein (GAP) that modifies Der/EngA GTPase function. May play a role in ribosome biogenesis. The protein is Der GTPase-activating protein YihI of Histophilus somni (strain 129Pt) (Haemophilus somnus).